The chain runs to 82 residues: Small ribosomal subunit protein bS16 (82 aa).

This sequence belongs to the bacterial ribosomal protein bS16 family.

The polypeptide is Small ribosomal subunit protein bS16 (Mannheimia succiniciproducens (strain KCTC 0769BP / MBEL55E)).